The sequence spans 582 residues: Ubiquilin-1 (582 aa).

Disordered regions lie at residues 1-26 (MAES…AEPK) and 102-136 (RPQD…AANS). Residue A2 is modified to N-acetylalanine. In terms of domain architecture, Ubiquitin-like spans 28–102 (MKVTVKTPKE…VHLVIKTQNR (75 aa)). A compositionally biased stretch (polar residues) spans 102–135 (RPQDNSAQQTNTTGNSVTSSPAPDSNPTSGPAAN). The interaction with UBXN4 stretch occupies residues 169–422 (QLLSNPEMMV…LNNPLFAGNP (254 aa)). STI1 domains lie at 173–201 (NPEM…QLIM) and 203–242 (NPQM…MQEM). Positions 285 to 365 (NPFASLVSSP…NLVPGAGASM (81 aa)) are disordered. Polar residues predominate over residues 290–304 (LVSSPSSAEGTQPSR). Over residues 318–346 (QTPQSSPASGSTGSTTNTVSTSAGNATST) the composition is skewed to low complexity. 2 STI1 domains span residues 381–428 (NPQL…QEQM) and 432–464 (LPTF…QQGL). Residues 481-513 (GLAAGNSGGPAGTTAPSTAPGEDTNPQGGAAEP) form a disordered region. Positions 539–579 (RFQQQLEQLSAMGFLNREANLQALIATGGDINAAIERLLGS) constitute a UBA domain.

In terms of assembly, monomer and homodimer. Heterodimer with UBQLN2. Binds CD47. Binds NBL1. Binds GABRA1, GABRA2, GABRA3, GABRA6, GABRB1, GABRB2 and GABRB3. Binds UBE3A, BTRC, P4HB and MTOR. Interacts with the proteasome 19S subunit. Interacts (via ubiquitin-like domain) with TREX1; the interaction is direct and may control TREX1 subcellular location. Forms a complex with UBXN4 and VCP. Interacts (via UBA domain) with UBQLN4 (via ubiquitin-like domain). Found in a complex with UBQLN2 and MAP1LC3A/B/C. The monomeric form interacts with PSEN1 and PSEN2. Interacts with ORAI1. Interacts (via UBA domain) with TICAM1. Interacts with EPS15. Interacts (via UBA domain) with UBA52 and (via ubiquitin-like domain) with PSMD3 and PSMD4. Interacts with HERPUD1. Interacts with MAP1LC3A/B/C in the presence of UBQLN4. Interacts (via ubiquitin-like domain) with EPS15 (via UIM domains) and both the ubiquitinated and non-ubiquitinated forms can interact with EPS15. Interacts (via ubiquitin-like domain) with EPS15L1, HGS (via UIM domain) and STAM2 (via UIM domain). Interacts with BCL2L10/BCL-B; in the cytoplasm. In terms of processing, degraded during both macroautophagy and during chaperone-mediated autophagy (CMA). Phosphorylated. Post-translationally, ubiquitinated.

It localises to the nucleus. The protein localises to the cytoplasm. Its subcellular location is the endoplasmic reticulum. It is found in the cytoplasmic vesicle. The protein resides in the autophagosome. It localises to the cell membrane. Its function is as follows. Plays an important role in the regulation of different protein degradation mechanisms and pathways including ubiquitin-proteasome system (UPS), autophagy and endoplasmic reticulum-associated protein degradation (ERAD) pathway. Mediates the proteasomal targeting of misfolded or accumulated proteins for degradation by binding (via UBA domain) to their polyubiquitin chains and by interacting (via ubiquitin-like domain) with the subunits of the proteasome. Plays a role in the ERAD pathway via its interaction with ER-localized proteins UBXN4, VCP and HERPUD1 and may form a link between the polyubiquitinated ERAD substrates and the proteasome. Plays a role in unfolded protein response (UPR) by attenuating the induction of UPR-inducible genes, DDTI3/CHOP, HSPA5 and PDIA2 during ER stress. Involved in the regulation of macroautophagy and autophagosome formation; required for maturation of autophagy-related protein LC3 from the cytosolic form LC3-I to the membrane-bound form LC3-II and may assist in the maturation of autophagosomes to autolysosomes by mediating autophagosome-lysosome fusion. Negatively regulates the TICAM1/TRIF-dependent toll-like receptor signaling pathway by decreasing the abundance of TICAM1 via the autophagic pathway. Promotes the ubiquitination and lysosomal degradation of ORAI1, consequently down-regulating the ORAI1-mediated Ca2+ mobilization. Suppresses the maturation and proteasomal degradation of amyloid beta A4 protein (A4) by stimulating the lysine 63 (K63)-linked polyubiquitination. Delays the maturation of A4 by sequestering it in the Golgi apparatus and preventing its transport to the cell surface for subsequent processing. Promotes the surface expression of GABA-A receptors. Ubiquitinates BCL2L10 and thereby stabilizes protein abundance. The protein is Ubiquilin-1 (Ubqln1) of Rattus norvegicus (Rat).